A 444-amino-acid polypeptide reads, in one-letter code: Cell division cycle 20.4, cofactor of APC complex (444 aa).

A compositionally biased stretch (polar residues) spans 88–99 (LLSTNHSDSPHQ). The segment at 88-108 (LLSTNHSDSPHQNPKPVKPRR) is disordered. WD repeat units follow at residues 124–161 (RDDFSLNLLDWGSANVLAIALGDTVYLWDASSGSTSEL), 166–205 (EDKGPVTSINWTQDGLDLAVGLDNSEVQLWDCVSNRQVRT), 209–246 (GHESRVGSLAWDNHILTTGGMDGKIVNNDVRIRSSIVE), 250–289 (GHTEEVCGLKWSESGNKQASGGNDNVVHIWDRSLASSKQT), 298–340 (EHTA…CLNS), 342–383 (ETGS…KMAE), and 386–425 (GHTSRVLFMAQSPNGCTVASAAGDENLRLWNVFGEPPKTT).

Belongs to the WD repeat CDC20/Fizzy family. As to quaternary structure, the APC/C is composed of at least 11 subunits that stay tightly associated throughout the cell cycle.

It localises to the cytoplasm. It participates in protein modification; protein ubiquitination. In terms of biological role, component of the anaphase promoting complex/cyclosome (APC/C), a cell cycle-regulated E3 ubiquitin-protein ligase complex that controls progression through mitosis and the G1 phase of the cell cycle. This is Cell division cycle 20.4, cofactor of APC complex (CDC20-4) from Arabidopsis thaliana (Mouse-ear cress).